The sequence spans 233 residues: Orotidine 5'-phosphate decarboxylase (233 aa).

Substrate is bound by residues Asp-9, Lys-31, 58–67 (DLKLHDIPNT), Thr-120, Arg-182, Gln-191, Gly-211, and Arg-212. The active-site Proton donor is the Lys-60.

The protein belongs to the OMP decarboxylase family. Type 1 subfamily. As to quaternary structure, homodimer.

It carries out the reaction orotidine 5'-phosphate + H(+) = UMP + CO2. It functions in the pathway pyrimidine metabolism; UMP biosynthesis via de novo pathway; UMP from orotate: step 2/2. Functionally, catalyzes the decarboxylation of orotidine 5'-monophosphate (OMP) to uridine 5'-monophosphate (UMP). The chain is Orotidine 5'-phosphate decarboxylase from Listeria monocytogenes serovar 1/2a (strain ATCC BAA-679 / EGD-e).